Consider the following 277-residue polypeptide: uncharacterized protein (277 aa).

This sequence belongs to the BtpA family.

The protein localises to the mitochondrion. This is an uncharacterized protein from Caenorhabditis elegans.